We begin with the raw amino-acid sequence, 516 residues long: uncharacterized protein (516 aa).

The next 9 helical transmembrane spans lie at 183–203 (SAAD…GDGV), 261–281 (VLKT…TYII), 308–328 (VMNG…TALL), 329–349 (LDHQ…AYSF), 356–376 (LLDV…GQVL), 379–399 (LAFS…LALA), 430–450 (LGHG…FLAL), 461–481 (PAWL…IWLL), and 492–512 (IVFA…ASAF).

It is found in the cell membrane. Possible permease/transporter. This is an uncharacterized protein from Sinorhizobium fredii (strain NBRC 101917 / NGR234).